Consider the following 506-residue polypeptide: UDP-glycosyltransferase eriJ (506 aa).

Belongs to the UDP-glycosyltransferase family.

It catalyses the reaction 11-O-acetylcyathatriol + UDP-alpha-D-xylose = erinacine Q + UDP + H(+). It carries out the reaction 11-O-acetylcyathatriol + UDP-alpha-D-glucose = erinacine Q2 + UDP + H(+). It participates in secondary metabolite biosynthesis. UDP-glycosyltransferase; part of the gene cluster that mediates the biosynthesis of erinacines, cyathane-xylosides that show unique biological activities, including leishmanicidal activity, stimulating activity for nerve growth-factor synthesis, and agonistic activity toward the kappa opioid receptor. Within the pathway, eriJ tranfers xylose from UDP-xylose onto C-14 of 11-O-acetyl-cyathatriol to form eracine Q, and, at a lower rate, glucose from UDP-D-glucose to produce eracine Q2. The first step of the erinacines biosynthesis pathway is catalyzed by the geranylgeranyl diphosphate (GGPP) synthase eriE via conversion of farnesyl pyrophosphate and isopentyl pyrophosphate into geranylgeranyl pyrophosphate (GGPP). GGPP is then substrate of the diterpene cyclase eriG for the production of cyatha-3,12-diene. The cytochrome P450 monooxygenase eriI then hydroxylates cyatha-3,12-diene at C-14 of the seven-membered ring to produce erinacol, which is further hydroxylated at C-15 by the cytochrome P450 monooxygenase eriC to yield cyathadiol. The cytochrome P450 monooxygenase eriA then catalyzes C-11 hydroxylation in the presence of the short chain dehydrogenase/reductase (SDR) eriH, which leads to the production of cyathatriol. The acetyltransferase eriL converts cyathatriol into 11-O-acetyl-cyathatriol. The SDR eriH catalyzes further oxidation of 11-O-acetyl-cyathatriol into 1-O-acetylcyathin A3. Finally, the glycosyl transferase eriJ tranfers xylose from UDP-xylose onto C-14 of 11-O-acetyl-cyathatriol to form eracine Q. EriJ is also able to convert 11-O-acetyl-cyathatriol to eracine Q2 by using UDP-D-glucose as cosubstrate, but at a lower rate. In Hericium erinaceus (Lion's mane mushroom), this protein is UDP-glycosyltransferase eriJ.